Consider the following 282-residue polypeptide: 4-hydroxybenzoate octaprenyltransferase (282 aa).

9 consecutive transmembrane segments (helical) span residues 17–37 (IGIL…NQGF), 40–60 (IDLL…GCVI), 90–110 (AFIL…KLPI), 113–133 (FYFA…KRFL), 135–155 (APQL…FIAS), 163–183 (FVVL…MYAM), 207–227 (LIIA…AINK), 231–251 (WFFY…LKLI), and 262–282 (AFLV…LALI).

It belongs to the UbiA prenyltransferase family. Mg(2+) is required as a cofactor.

It is found in the cell inner membrane. It catalyses the reaction all-trans-octaprenyl diphosphate + 4-hydroxybenzoate = 4-hydroxy-3-(all-trans-octaprenyl)benzoate + diphosphate. It functions in the pathway cofactor biosynthesis; ubiquinone biosynthesis. Functionally, catalyzes the prenylation of para-hydroxybenzoate (PHB) with an all-trans polyprenyl group. Mediates the second step in the final reaction sequence of ubiquinone-8 (UQ-8) biosynthesis, which is the condensation of the polyisoprenoid side chain with PHB, generating the first membrane-bound Q intermediate 3-octaprenyl-4-hydroxybenzoate. This Legionella pneumophila (strain Paris) protein is 4-hydroxybenzoate octaprenyltransferase.